Here is a 154-residue protein sequence, read N- to C-terminus: UPF0756 membrane protein BPUM_2558 (154 aa).

4 helical membrane-spanning segments follow: residues Phe8–Val28, Trp54–Phe74, Trp87–Leu107, and Leu117–Ile137.

This sequence belongs to the UPF0756 family.

The protein resides in the cell membrane. The sequence is that of UPF0756 membrane protein BPUM_2558 from Bacillus pumilus (strain SAFR-032).